The primary structure comprises 296 residues: Ribosomal RNA small subunit methyltransferase A (296 aa).

S-adenosyl-L-methionine-binding residues include Asn30, Leu32, Gly57, Glu78, Asp103, and Asn128.

It belongs to the class I-like SAM-binding methyltransferase superfamily. rRNA adenine N(6)-methyltransferase family. RsmA subfamily.

The protein resides in the cytoplasm. It catalyses the reaction adenosine(1518)/adenosine(1519) in 16S rRNA + 4 S-adenosyl-L-methionine = N(6)-dimethyladenosine(1518)/N(6)-dimethyladenosine(1519) in 16S rRNA + 4 S-adenosyl-L-homocysteine + 4 H(+). Functionally, specifically dimethylates two adjacent adenosines (A1518 and A1519) in the loop of a conserved hairpin near the 3'-end of 16S rRNA in the 30S particle. May play a critical role in biogenesis of 30S subunits. The chain is Ribosomal RNA small subunit methyltransferase A from Staphylococcus carnosus (strain TM300).